The following is a 126-amino-acid chain: MARVKRAVNAQKKRRTVLEQASGYRGQRSRLYRKAKEQMLHSMTYSYRDRRARKGDFRQLWITRINAAARANGLTYNRFVQGLKLSGVEVDRKILADLAVNDAVAFTALVEVARAALAAAPEPTAA.

This sequence belongs to the bacterial ribosomal protein bL20 family.

Its function is as follows. Binds directly to 23S ribosomal RNA and is necessary for the in vitro assembly process of the 50S ribosomal subunit. It is not involved in the protein synthesizing functions of that subunit. The polypeptide is Large ribosomal subunit protein bL20 (Frankia casuarinae (strain DSM 45818 / CECT 9043 / HFP020203 / CcI3)).